We begin with the raw amino-acid sequence, 312 residues long: Ornithine carbamoyltransferase (312 aa).

Residues 57–60 (STRT), Q84, R108, and 135–138 (HPCQ) contribute to the carbamoyl phosphate site. L-ornithine contacts are provided by residues N166, D226, and 230 to 231 (SM). Residues 265–266 (CL) and R293 contribute to the carbamoyl phosphate site.

The protein belongs to the aspartate/ornithine carbamoyltransferase superfamily. OTCase family.

Its subcellular location is the cytoplasm. It carries out the reaction carbamoyl phosphate + L-ornithine = L-citrulline + phosphate + H(+). It functions in the pathway amino-acid biosynthesis; L-arginine biosynthesis; L-arginine from L-ornithine and carbamoyl phosphate: step 1/3. Functionally, reversibly catalyzes the transfer of the carbamoyl group from carbamoyl phosphate (CP) to the N(epsilon) atom of ornithine (ORN) to produce L-citrulline. The polypeptide is Ornithine carbamoyltransferase (Brucella ovis (strain ATCC 25840 / 63/290 / NCTC 10512)).